Here is a 318-residue protein sequence, read N- to C-terminus: Aspartate carbamoyltransferase catalytic subunit (318 aa).

Carbamoyl phosphate contacts are provided by R58 and T59. K86 serves as a coordination point for L-aspartate. The carbamoyl phosphate site is built by R108, H141, and Q144. 2 residues coordinate L-aspartate: R174 and R226. Residues G270 and P271 each coordinate carbamoyl phosphate.

It belongs to the aspartate/ornithine carbamoyltransferase superfamily. ATCase family. In terms of assembly, heterododecamer (2C3:3R2) of six catalytic PyrB chains organized as two trimers (C3), and six regulatory PyrI chains organized as three dimers (R2).

The enzyme catalyses carbamoyl phosphate + L-aspartate = N-carbamoyl-L-aspartate + phosphate + H(+). It functions in the pathway pyrimidine metabolism; UMP biosynthesis via de novo pathway; (S)-dihydroorotate from bicarbonate: step 2/3. Functionally, catalyzes the condensation of carbamoyl phosphate and aspartate to form carbamoyl aspartate and inorganic phosphate, the committed step in the de novo pyrimidine nucleotide biosynthesis pathway. This chain is Aspartate carbamoyltransferase catalytic subunit, found in Lactobacillus gasseri (strain ATCC 33323 / DSM 20243 / BCRC 14619 / CIP 102991 / JCM 1131 / KCTC 3163 / NCIMB 11718 / NCTC 13722 / AM63).